The sequence spans 718 residues: Ribosomal RNA large subunit methyltransferase K/L (718 aa).

The 112-residue stretch at 44–155 (DAYKVCIYSY…KQFVNVFLCL (112 aa)) folds into the THUMP domain.

The protein belongs to the methyltransferase superfamily. RlmKL family.

It localises to the cytoplasm. The catalysed reaction is guanosine(2445) in 23S rRNA + S-adenosyl-L-methionine = N(2)-methylguanosine(2445) in 23S rRNA + S-adenosyl-L-homocysteine + H(+). It catalyses the reaction guanosine(2069) in 23S rRNA + S-adenosyl-L-methionine = N(2)-methylguanosine(2069) in 23S rRNA + S-adenosyl-L-homocysteine + H(+). Specifically methylates the guanine in position 2445 (m2G2445) and the guanine in position 2069 (m7G2069) of 23S rRNA. The protein is Ribosomal RNA large subunit methyltransferase K/L of Francisella tularensis subsp. novicida (strain U112).